Consider the following 85-residue polypeptide: U4-theraphotoxin-Hhn1s (85 aa).

The signal sequence occupies residues 1 to 22; the sequence is MKVTLIAILTCAAVLVLHTTAA. Positions 23–48 are excised as a propeptide; sequence EELEAESQLMEVGMPDTELAAVDEER. Cystine bridges form between cysteine 52–cysteine 66, cysteine 56–cysteine 77, and cysteine 71–cysteine 82.

Belongs to the neurotoxin 12 (Hwtx-2) family. 02 (Hwtx-2) subfamily. In terms of tissue distribution, expressed by the venom gland.

Its subcellular location is the secreted. Postsynaptic neurotoxin. The protein is U4-theraphotoxin-Hhn1s of Cyriopagopus hainanus (Chinese bird spider).